We begin with the raw amino-acid sequence, 962 residues long: Glycine dehydrogenase (decarboxylating) (962 aa).

Lys-709 is modified (N6-(pyridoxal phosphate)lysine).

This sequence belongs to the GcvP family. As to quaternary structure, the glycine cleavage system is composed of four proteins: P, T, L and H. Pyridoxal 5'-phosphate serves as cofactor.

The enzyme catalyses N(6)-[(R)-lipoyl]-L-lysyl-[glycine-cleavage complex H protein] + glycine + H(+) = N(6)-[(R)-S(8)-aminomethyldihydrolipoyl]-L-lysyl-[glycine-cleavage complex H protein] + CO2. The glycine cleavage system catalyzes the degradation of glycine. The P protein binds the alpha-amino group of glycine through its pyridoxal phosphate cofactor; CO(2) is released and the remaining methylamine moiety is then transferred to the lipoamide cofactor of the H protein. In Shewanella amazonensis (strain ATCC BAA-1098 / SB2B), this protein is Glycine dehydrogenase (decarboxylating).